The chain runs to 672 residues: Putative sodium/calcium exchanger 7 (672 aa).

The first 23 residues, 1–23 (MAQPSILFSLTLIFLISIKSCDA), serve as a signal peptide directing secretion. The next 12 helical transmembrane spans lie at 88-108 (VILI…VSSA), 130-150 (VAGV…GSIA), 164-184 (LGEL…TIIL), 196-216 (IRDL…FVFY), 221-241 (LWMP…VIGA), 451-471 (LTLL…QFFL), 479-499 (PGLW…IMVF), 522-542 (IAWI…LGVV), 551-571 (GLTI…VSVV), 581-601 (AAAI…PFTI), 620-640 (LILF…VQKF), and 649-669 (VLIS…TGVL).

This sequence belongs to the Ca(2+):cation antiporter (CaCA) (TC 2.A.19) family.

It localises to the membrane. This is Putative sodium/calcium exchanger 7 (ncx-7) from Caenorhabditis elegans.